Reading from the N-terminus, the 600-residue chain is UvrABC system protein C (600 aa).

One can recognise a GIY-YIG domain in the interval 15–100; it reads NSAGVYEYFN…IKQLHPKYNI (86 aa). A UVR domain is found at 203–238; the sequence is SVLLKNLEKQMLVLAQNENYEEAAKIRDQIATIKDL.

Belongs to the UvrC family. In terms of assembly, interacts with UvrB in an incision complex.

The protein resides in the cytoplasm. In terms of biological role, the UvrABC repair system catalyzes the recognition and processing of DNA lesions. UvrC both incises the 5' and 3' sides of the lesion. The N-terminal half is responsible for the 3' incision and the C-terminal half is responsible for the 5' incision. The polypeptide is UvrABC system protein C (Campylobacter jejuni subsp. doylei (strain ATCC BAA-1458 / RM4099 / 269.97)).